A 335-amino-acid polypeptide reads, in one-letter code: MLNTVIVGASGYAGAELAALVQNHPQLKLFGLYVSAGSQDAHKRFSSLHPQWVGALDQPLLPLDEDGMTRILTQADLVLLATAHEVSATLAPKFLAKGLPVFDLSGAFRVRDQQFYASYYGFTHDSEQWLDQAAYGLAEWNAEAVKAAQLIAVPGCYPTASLCALKPLQQAGLIAKGWQPIINAVSGVSGAGRKAAINTSFCEVSLNPYGTFNHRHQPEISHHLGKEVLFQPHLGNYVRGILATIYVQLADGVTPTQVDQAYLKAYEGKPLVRLTGQMPSIRGVAGTPYCDLAWQQQGNMLVVVCAIDNLLKGAASQAMQCINIKFGFEPATGLI.

Cys-156 is a catalytic residue.

This sequence belongs to the NAGSA dehydrogenase family. Type 1 subfamily.

The protein resides in the cytoplasm. The enzyme catalyses N-acetyl-L-glutamate 5-semialdehyde + phosphate + NADP(+) = N-acetyl-L-glutamyl 5-phosphate + NADPH + H(+). Its pathway is amino-acid biosynthesis; L-arginine biosynthesis; N(2)-acetyl-L-ornithine from L-glutamate: step 3/4. Its function is as follows. Catalyzes the NADPH-dependent reduction of N-acetyl-5-glutamyl phosphate to yield N-acetyl-L-glutamate 5-semialdehyde. This Aeromonas hydrophila subsp. hydrophila (strain ATCC 7966 / DSM 30187 / BCRC 13018 / CCUG 14551 / JCM 1027 / KCTC 2358 / NCIMB 9240 / NCTC 8049) protein is N-acetyl-gamma-glutamyl-phosphate reductase.